A 385-amino-acid polypeptide reads, in one-letter code: UPF0284 protein PMT9312_0438 (385 aa).

The protein belongs to the UPF0284 family.

The chain is UPF0284 protein PMT9312_0438 from Prochlorococcus marinus (strain MIT 9312).